The following is a 445-amino-acid chain: ATP synthase subunit b-delta (445 aa).

An ATP synthase subunit b region spans residues 1-168; that stretch reads MSIFIGQLIG…PSSVVIDTAA (168 aa). A helical transmembrane segment spans residues 3-23; that stretch reads IFIGQLIGFAVIAFIIVKWVV. The interval 169–445 is ATP synthase subunit delta; that stretch reads TSRLRAASRQ…LAAAQTGLPD (277 aa).

In the N-terminal section; belongs to the ATPase B chain family. The protein in the C-terminal section; belongs to the ATPase delta chain family. As to quaternary structure, F-type ATPases have 2 components, F(1) - the catalytic core - and F(0) - the membrane proton channel. F(1) has five subunits: alpha(3), beta(3), gamma(1), delta(1), epsilon(1). F(0) has three main subunits: a(1), b(2) and c(10-14). The alpha and beta chains form an alternating ring which encloses part of the gamma chain. F(1) is attached to F(0) by a central stalk formed by the gamma and epsilon chains, while a peripheral stalk is formed by the delta and b chains.

The protein localises to the cell membrane. Its function is as follows. F(1)F(0) ATP synthase produces ATP from ADP in the presence of a proton or sodium gradient. F-type ATPases consist of two structural domains, F(1) containing the extramembraneous catalytic core and F(0) containing the membrane proton channel, linked together by a central stalk and a peripheral stalk. During catalysis, ATP synthesis in the catalytic domain of F(1) is coupled via a rotary mechanism of the central stalk subunits to proton translocation. In terms of biological role, this fusion protein includes a component of the F(0) channel (subunit b) and of the F(1) subunit (subunit delta). Two copies of subunit b and one of delta together form the peripheral 'stator' stalk which links F(1) to F(0). The polypeptide is ATP synthase subunit b-delta (atpFH) (Mycolicibacterium smegmatis (strain ATCC 700084 / mc(2)155) (Mycobacterium smegmatis)).